The following is a 421-amino-acid chain: MFADKSLSALNAACQRAQQDLQSHCCSLGEHIVRGGAACDISGLGVQDTDISRCHALQRQRDQVAESILDIKSILQRQEELAALGKRVSKVLHRHARQERDVLRSFVAQYYATYAHVGLPALEPIYARTAELESTLQDLRAKRDQLLETCTFGSILERVGLQAKSAVVQRRIRVLEAKIQKIITLCTPDVIAHPDVERMYHAGELSSALSAAYARLISDRGVYASNLQHSQELMDEQEALDARLRALDCGAKPLKRVAAFTAQVSELDEDINALCARIGAAYASCFFTEEGFAQPPLSQKTRPTVPDELSTLLRTVAEARMRVARAGYQVECAKLRQKLQSEQRVCESFCRSIEEYRRGIKEYEAMIESAQQNVALSKATVARLAQSLEEASERLTLFETSPEPIVLSSEVLSVPQEKASV.

Coiled-coil stretches lie at residues 126-182 and 328-397; these read YART…IQKI and YQVE…RLTL.

This is an uncharacterized protein from Treponema pallidum (strain Nichols).